A 379-amino-acid chain; its full sequence is Glutamate 5-kinase (379 aa).

Lysine 19 is an ATP binding site. Substrate-binding residues include serine 59, aspartate 146, and asparagine 158. Position 178–179 (178–179) interacts with ATP; sequence TD. The 79-residue stretch at 285-363 folds into the PUA domain; that stretch reads RGAVTVDAGA…SEFERLLGYV (79 aa).

Belongs to the glutamate 5-kinase family.

The protein localises to the cytoplasm. It catalyses the reaction L-glutamate + ATP = L-glutamyl 5-phosphate + ADP. The protein operates within amino-acid biosynthesis; L-proline biosynthesis; L-glutamate 5-semialdehyde from L-glutamate: step 1/2. Its function is as follows. Catalyzes the transfer of a phosphate group to glutamate to form L-glutamate 5-phosphate. The chain is Glutamate 5-kinase from Variovorax paradoxus (strain S110).